Here is a 389-residue protein sequence, read N- to C-terminus: Na(+)/H(+) antiporter NhaA 1 (389 aa).

The next 11 membrane-spanning stretches (helical) occupy residues Ala-14–Leu-34, Phe-47–Ile-67, Ile-87–Phe-107, Gly-117–Gly-137, Val-146–Phe-166, Leu-171–Ala-191, Leu-197–His-217, Val-252–Val-272, Met-280–Phe-300, Ile-321–Leu-341, and Leu-356–Ser-376.

This sequence belongs to the NhaA Na(+)/H(+) (TC 2.A.33) antiporter family.

The protein localises to the cell inner membrane. The catalysed reaction is Na(+)(in) + 2 H(+)(out) = Na(+)(out) + 2 H(+)(in). In terms of biological role, na(+)/H(+) antiporter that extrudes sodium in exchange for external protons. The protein is Na(+)/H(+) antiporter NhaA 1 of Vibrio vulnificus (strain CMCP6).